Here is a 273-residue protein sequence, read N- to C-terminus: Nitrogenase iron protein 2 (273 aa).

8 to 15 (GKGGIGKS) contributes to the ATP binding site. Residue Cys95 coordinates [4Fe-4S] cluster. Position 98 is an ADP-ribosylarginine; by dinitrogenase reductase ADP-ribosyltransferase (Arg98). [4Fe-4S] cluster is bound at residue Cys130.

This sequence belongs to the NifH/BchL/ChlL family. As to quaternary structure, homodimer. The cofactor is [4Fe-4S] cluster. In terms of processing, the reversible ADP-ribosylation of Arg-98 inactivates the nitrogenase reductase and regulates nitrogenase activity.

The catalysed reaction is N2 + 8 reduced [2Fe-2S]-[ferredoxin] + 16 ATP + 16 H2O = H2 + 8 oxidized [2Fe-2S]-[ferredoxin] + 2 NH4(+) + 16 ADP + 16 phosphate + 6 H(+). Functionally, the key enzymatic reactions in nitrogen fixation are catalyzed by the nitrogenase complex, which has 2 components: the iron protein and the molybdenum-iron protein. This is Nitrogenase iron protein 2 (nifH2) from Methanosarcina barkeri.